The primary structure comprises 398 residues: Mannitol-1-phosphate 5-dehydrogenase (398 aa).

Position 10 to 21 (10 to 21 (AVHFGAGNIGRG)) interacts with NAD(+). Residue Lys221 is part of the active site.

This sequence belongs to the mannitol dehydrogenase family. In terms of assembly, monomer.

It catalyses the reaction D-mannitol 1-phosphate + NAD(+) = beta-D-fructose 6-phosphate + NADH + H(+). Its function is as follows. Catalyzes the NAD(H)-dependent interconversion of D-fructose 6-phosphate and D-mannitol 1-phosphate in the mannitol metabolic pathway. This chain is Mannitol-1-phosphate 5-dehydrogenase, found in Chaetomium globosum (strain ATCC 6205 / CBS 148.51 / DSM 1962 / NBRC 6347 / NRRL 1970) (Soil fungus).